The chain runs to 458 residues: Siroheme synthase (458 aa).

The interval 1–203 (MDYLPLFFDL…GNLAAAEQLI (203 aa)) is precorrin-2 dehydrogenase /sirohydrochlorin ferrochelatase. Residues 22-23 (TI) and 43-44 (PK) contribute to the NAD(+) site. The residue at position 128 (Ser-128) is a Phosphoserine. Residues 216–458 (GEVYLVGAGP…RCHEKLNWYK (243 aa)) are uroporphyrinogen-III C-methyltransferase. Pro-225 contacts S-adenosyl-L-methionine. Catalysis depends on Asp-248, which acts as the Proton acceptor. The active-site Proton donor is the Lys-270. S-adenosyl-L-methionine is bound by residues 301–303 (GGD), Ile-306, 331–332 (TA), Met-383, and Gly-412.

In the N-terminal section; belongs to the precorrin-2 dehydrogenase / sirohydrochlorin ferrochelatase family. It in the C-terminal section; belongs to the precorrin methyltransferase family.

The catalysed reaction is uroporphyrinogen III + 2 S-adenosyl-L-methionine = precorrin-2 + 2 S-adenosyl-L-homocysteine + H(+). It carries out the reaction precorrin-2 + NAD(+) = sirohydrochlorin + NADH + 2 H(+). The enzyme catalyses siroheme + 2 H(+) = sirohydrochlorin + Fe(2+). It functions in the pathway cofactor biosynthesis; adenosylcobalamin biosynthesis; precorrin-2 from uroporphyrinogen III: step 1/1. It participates in cofactor biosynthesis; adenosylcobalamin biosynthesis; sirohydrochlorin from precorrin-2: step 1/1. The protein operates within porphyrin-containing compound metabolism; siroheme biosynthesis; precorrin-2 from uroporphyrinogen III: step 1/1. Its pathway is porphyrin-containing compound metabolism; siroheme biosynthesis; siroheme from sirohydrochlorin: step 1/1. It functions in the pathway porphyrin-containing compound metabolism; siroheme biosynthesis; sirohydrochlorin from precorrin-2: step 1/1. In terms of biological role, multifunctional enzyme that catalyzes the SAM-dependent methylations of uroporphyrinogen III at position C-2 and C-7 to form precorrin-2 via precorrin-1. Then it catalyzes the NAD-dependent ring dehydrogenation of precorrin-2 to yield sirohydrochlorin. Finally, it catalyzes the ferrochelation of sirohydrochlorin to yield siroheme. The chain is Siroheme synthase from Saccharophagus degradans (strain 2-40 / ATCC 43961 / DSM 17024).